The chain runs to 1639 residues: RIMS-binding protein 3A (1639 aa).

Disordered regions lie at residues Met-1–Ala-22, Gly-215–Pro-240, and Ser-295–Ser-364. The stretch at Pro-21 to Leu-143 forms a coiled coil. The segment covering Ser-326–Ser-339 has biased composition (pro residues). Coiled coils occupy residues Gln-409–Asn-442 and Leu-480–Asn-619. Residues Cys-697 to Asp-811 are disordered. Polar residues-rich tracts occupy residues Trp-707–Lys-718 and Ser-761–Leu-775. Low complexity predominate over residues Ser-776–Ser-790. Residues Pro-832 to Asp-899 form the SH3 1 domain. 2 consecutive Fibronectin type-III domains span residues Ala-995–Ala-1083 and Pro-1088–Asp-1184. Disordered stretches follow at residues Pro-1251 to Ser-1273 and Gln-1292 to Leu-1330. A compositionally biased stretch (polar residues) spans Lys-1293–Asp-1305. 2 consecutive SH3 domains span residues Thr-1452–Val-1520 and Trp-1569–Leu-1636.

The protein belongs to the RIMBP family. Interacts with LRGUK (via guanylate kinase-like domain). Interacts (via C-terminus) with HOOK1 (via coiled-coil region).

The protein resides in the cytoplasm. It localises to the cytoskeleton. Probable component of the manchette, a microtubule-based structure which plays a key role in sperm head morphogenesis during late stages of sperm development. This is RIMS-binding protein 3A (RIMBP3) from Homo sapiens (Human).